The chain runs to 557 residues: Isocitrate lyase (557 aa).

Thr53 carries the post-translational modification Phosphothreonine. Residue 106–108 (SGW) coordinates substrate. Asp179 lines the Mg(2+) pocket. The active-site Proton acceptor is Cys217. Substrate is bound by residues 218 to 219 (GH), Arg254, 437 to 441 (NLSPS), and Thr471.

Belongs to the isocitrate lyase/PEP mutase superfamily. Isocitrate lyase family. As to quaternary structure, homotetramer. Mg(2+) serves as cofactor. In terms of processing, phosphorylated in response to elevated glucose levels, leading first to reversible inactivation of the enzyme (short-term inactivation), and at a later stage to proteolytic degradation of the protein (long-term inactivation).

Its subcellular location is the cytoplasm. The protein localises to the secreted. The protein resides in the extracellular space. It is found in the extracellular matrix. It localises to the vacuole. The enzyme catalyses D-threo-isocitrate = glyoxylate + succinate. The catalysed reaction is (2S,3R)-3-hydroxybutane-1,2,3-tricarboxylate = pyruvate + succinate. The protein operates within carbohydrate metabolism; glyoxylate cycle; (S)-malate from isocitrate: step 1/2. Its activity is regulated as follows. Phosphorylated and inactivated after addition of glucose to the cell culture (repressing conditions). Functionally, catalyzes the formation of succinate and glyoxylate from isocitrate, a key step of the glyoxylate cycle, which operates as an anaplerotic route for replenishing the tricarboxylic acid cycle. Required for growth on ethanol or acetate, but dispensable when fermentable carbon sources are available. Also acts on 2-methylisocitrate. This chain is Isocitrate lyase, found in Saccharomyces cerevisiae (strain ATCC 204508 / S288c) (Baker's yeast).